Reading from the N-terminus, the 304-residue chain is MPHVSLQNVTKLFGEDTIALDDVSIEITAGEFVVILGPSGAGKSTLLRILNGLTEPTTGTAQIGGSPVSESGSDVGMVFQMHYLIESLSAYRNALTGALSRTTNLKSILTLNQTDDKRAALRALDTVGLLKDAEQRAGTMSGGQKQRVGIARALVQNPSLLLADEPVSSLDPKAARDVMRYMKQAARERELTTVASLHQVNIAREFGDRFIGVRDGTVIFDGSRAELSMDVIDDLYYAGSESTPVSHGDIEGQGEGLTKPDDTSVSSDMETTSGRDHSTGTDTGTDTGTDTETDTETDTGEAQL.

The 237-residue stretch at 4–240 (VSLQNVTKLF…VIDDLYYAGS (237 aa)) folds into the ABC transporter domain. 37–44 (GPSGAGKS) is an ATP binding site. Residues 240–304 (SESTPVSHGD…TETDTGEAQL (65 aa)) form a disordered region. A compositionally biased stretch (polar residues) spans 263–272 (TSVSSDMETT). Acidic residues predominate over residues 289 to 304 (TDTETDTETDTGEAQL).

This sequence belongs to the ABC transporter superfamily. Phosphonates importer (TC 3.A.1.9.1) family. The complex is composed of two ATP-binding proteins (PhnC), two transmembrane proteins (PhnE) and a solute-binding protein (PhnD).

Its subcellular location is the cell membrane. It catalyses the reaction phosphonate(out) + ATP + H2O = phosphonate(in) + ADP + phosphate + H(+). Its function is as follows. Part of the ABC transporter complex PhnCDE involved in phosphonates import. Responsible for energy coupling to the transport system. This is Phosphonates import ATP-binding protein PhnC 1 from Haloquadratum walsbyi (strain DSM 16790 / HBSQ001).